We begin with the raw amino-acid sequence, 272 residues long: Small ribosomal subunit protein mS23 (272 aa).

Residues 236-272 (AGATGGAKEESDPAILPELEVAESTSESAQPAEIRTG) are disordered.

The protein belongs to the mitochondrion-specific ribosomal protein mS23 family. In terms of assembly, component of the mitochondrial small ribosomal subunit.

It is found in the mitochondrion. This is Small ribosomal subunit protein mS23 (RSM25) from Coccidioides immitis (strain RS) (Valley fever fungus).